A 22-amino-acid polypeptide reads, in one-letter code: PVLQVVRDIHGDILTPDSRYIL.

The protein belongs to the protease inhibitor I3 (leguminous Kunitz-type inhibitor) family. Tubers.

It is found in the vacuole. Functionally, inhibitor of papain (cysteine protease). Does not inhibit trypsin, chymotrypsin nor elastase (serine proteases). May protect the plant by inhibiting proteases of invading organisms. The chain is Cysteine protease inhibitor 4 from Solanum tuberosum (Potato).